The chain runs to 408 residues: MIERSNSTPSATPARPPLAVDEEYNQAFRSKSFLDLWSHAHHHLTHTFSSFKLSTSTPCAGRGGAREDDFLHAGGDGGAADDSEQSCSYTVLDDFVLEPSPESLARGARLQQRRRRRPRRHRVETLLIEYFDVTEEACEACSALLAAIGAARRHHLTLRRLLLRLDGGDDDDAKDALARHVRLDNPLSPGSLSEFHDVHARCSPLASRLAAAQRRLRRLARALRIARGTAAAALVGACAAAIVAAVVLAAHALVGIGVAAAAFGATPAGAARWWGRRAAEKVSSRHYARAGATLDAAARGAYIVGRDLDTVSRMVRRAHDELEHGRDVARIAMRGHGERPLLQEVAREEEECEEDLRAQLAELEEHVCLCLITINRTRRLVAHEMARGLPPPSPATVTTTSEERLTSS.

Helical transmembrane passes span 224–244 and 252–272; these read RIARGTAAAALVGACAAAIVA and ALVGIGVAAAAFGATPAGAAR. The segment at 385 to 408 is disordered; the sequence is MARGLPPPSPATVTTTSEERLTSS.

This sequence belongs to the UPF0496 family.

It is found in the membrane. The sequence is that of Putative UPF0496 protein 2 from Oryza sativa subsp. japonica (Rice).